Consider the following 92-residue polypeptide: Small ribosomal subunit protein uS19 (92 aa).

Belongs to the universal ribosomal protein uS19 family.

Its function is as follows. Protein S19 forms a complex with S13 that binds strongly to the 16S ribosomal RNA. The protein is Small ribosomal subunit protein uS19 of Baumannia cicadellinicola subsp. Homalodisca coagulata.